Here is a 263-residue protein sequence, read N- to C-terminus: MKNKNVIQKMREKIPLIHCITNYVTINDCANILLSFGASPAMCEAYDEVYDFVSISSALYINLGTLTKEQETAAVLASISAKNHNVPVVIDPVGCPAIKRKVEVINRIAEVGRIDIIKGNIGEIKFLAGMDSETRGVDSLDNGENALNACTQLAKKYNCIVAATGQKDFVSDGKRGSVIKNGTEMLTKVTGAGCMLGALCAATCANFEDKLVSTTAAILSMNIAGEKAYEKAQLPGSFRIALIDNIYMISDEEIWERGNVEWK.

Met-42 provides a ligand contact to substrate. The ATP site is built by Lys-118 and Thr-164. Gly-191 lines the substrate pocket.

This sequence belongs to the Thz kinase family. Mg(2+) serves as cofactor.

The enzyme catalyses 5-(2-hydroxyethyl)-4-methylthiazole + ATP = 4-methyl-5-(2-phosphooxyethyl)-thiazole + ADP + H(+). Its pathway is cofactor biosynthesis; thiamine diphosphate biosynthesis; 4-methyl-5-(2-phosphoethyl)-thiazole from 5-(2-hydroxyethyl)-4-methylthiazole: step 1/1. Catalyzes the phosphorylation of the hydroxyl group of 4-methyl-5-beta-hydroxyethylthiazole (THZ). The polypeptide is Hydroxyethylthiazole kinase 1 (Clostridium botulinum (strain Langeland / NCTC 10281 / Type F)).